The following is a 469-amino-acid chain: Putative dipeptidase SAUSA300_1697 (469 aa).

Residue histidine 84 coordinates Zn(2+). Aspartate 86 is an active-site residue. Aspartate 115 lines the Zn(2+) pocket. Catalysis depends on glutamate 149, which acts as the Proton acceptor. Zn(2+)-binding residues include glutamate 150, aspartate 173, and histidine 440.

Belongs to the peptidase M20A family. It depends on Zn(2+) as a cofactor.

The protein is Putative dipeptidase SAUSA300_1697 of Staphylococcus aureus (strain USA300).